A 609-amino-acid chain; its full sequence is MTFSQKDRKETIQETAKTTYDVLIIGGGITGAGVAVQTAAAGMKTVLLEMQDFAEGTSSRSTKLVHGGIRYLKTFDVEVVADTVRERAIVQQIAPHIPKPDPMLLPIYDEPGATFSLFSVKVAMDLYDRLANVTGSKYENYLLTKEEVLAREPQLQAENLVGGGVYLDFRNNDARLVIENIKRAQADGAAMISKAKVVGILHDEQGIINGVEVEDQLTNERFEVHAKVVINTTGPWSDIVRQLDKNDELPPQMRPTKGVHLVVDREKLKVPQPTYFDTGKNDGRMVFVVPRENKTYFGTTDTDYTGDFAHPTVTQEDVDYLLTIVNERFPHAQITLDDIEASWAGLRPLITNNGGSDYNGGGKGKLSDESFEQIVESVKEYLADERQRPVVEKAVKQAQERVEASKVDPSQVSRGSSLERSKDGLLTLAGGKITDYRLMAEGAVKRINELLQESGASFELVDSTTYPVSGGELDAANVEEELAKLADQAQTAGFNEAAATYLAHLYGSNLPQVLNYKTKFEGLDEKESTALNYSLHEEMVLTPVDYLLRRTNHILFMRDTLDDVKAGVVAAMTDFFGWSEEEKAAHVLELNQVIAESDLTALKGGKKDE.

21–49 serves as a coordination point for FAD; the sequence is DVLIIGGGITGAGVAVQTAAAGMKTVLLE.

Requires FAD as cofactor.

Its subcellular location is the cytoplasm. It carries out the reaction sn-glycerol 3-phosphate + O2 = dihydroxyacetone phosphate + H2O2. The protein operates within membrane lipid metabolism; glycerophospholipid metabolism. The chain is Alpha-glycerophosphate oxidase (glpO) from Enterococcus casseliflavus (Enterococcus flavescens).